The primary structure comprises 361 residues: 3-dehydroquinate synthase (361 aa).

Residues 69-74 (DGEEYK), 103-107 (GVIGD), 127-128 (TT), Lys140, Lys149, and 167-170 (TLDT) contribute to the NAD(+) site. Zn(2+) is bound by residues Glu182, His245, and His262.

Belongs to the sugar phosphate cyclases superfamily. Dehydroquinate synthase family. Co(2+) is required as a cofactor. It depends on Zn(2+) as a cofactor. The cofactor is NAD(+).

The protein resides in the cytoplasm. It carries out the reaction 7-phospho-2-dehydro-3-deoxy-D-arabino-heptonate = 3-dehydroquinate + phosphate. The protein operates within metabolic intermediate biosynthesis; chorismate biosynthesis; chorismate from D-erythrose 4-phosphate and phosphoenolpyruvate: step 2/7. In terms of biological role, catalyzes the conversion of 3-deoxy-D-arabino-heptulosonate 7-phosphate (DAHP) to dehydroquinate (DHQ). The polypeptide is 3-dehydroquinate synthase (Thioalkalivibrio sulfidiphilus (strain HL-EbGR7)).